Reading from the N-terminus, the 575-residue chain is Proline--tRNA ligase (575 aa).

Belongs to the class-II aminoacyl-tRNA synthetase family. ProS type 1 subfamily. In terms of assembly, homodimer.

Its subcellular location is the cytoplasm. It carries out the reaction tRNA(Pro) + L-proline + ATP = L-prolyl-tRNA(Pro) + AMP + diphosphate. Catalyzes the attachment of proline to tRNA(Pro) in a two-step reaction: proline is first activated by ATP to form Pro-AMP and then transferred to the acceptor end of tRNA(Pro). As ProRS can inadvertently accommodate and process non-cognate amino acids such as alanine and cysteine, to avoid such errors it has two additional distinct editing activities against alanine. One activity is designated as 'pretransfer' editing and involves the tRNA(Pro)-independent hydrolysis of activated Ala-AMP. The other activity is designated 'posttransfer' editing and involves deacylation of mischarged Ala-tRNA(Pro). The misacylated Cys-tRNA(Pro) is not edited by ProRS. This is Proline--tRNA ligase from Desulfitobacterium hafniense (strain DSM 10664 / DCB-2).